A 178-amino-acid chain; its full sequence is Large ribosomal subunit protein uL6 (178 aa).

It belongs to the universal ribosomal protein uL6 family. In terms of assembly, part of the 50S ribosomal subunit.

Functionally, this protein binds to the 23S rRNA, and is important in its secondary structure. It is located near the subunit interface in the base of the L7/L12 stalk, and near the tRNA binding site of the peptidyltransferase center. The polypeptide is Large ribosomal subunit protein uL6 (Listeria innocua serovar 6a (strain ATCC BAA-680 / CLIP 11262)).